We begin with the raw amino-acid sequence, 838 residues long: Protein P (838 aa).

The segment at 1 to 177 (MPLSYQHFRK…FCGSPYSWEQ (177 aa)) is terminal protein domain (TP). Residues 178–341 (ELQHQTSTRH…YCLTHIVNLL (164 aa)) are spacer. 2 disordered regions span residues 215-238 (QSRL…SGSI) and 285-311 (STSK…RSQS). Positions 285–294 (STSKRQSSSG) are enriched in polar residues. Positions 342–685 (EDWGPCTEHG…YLHLYPVARQ (344 aa)) are polymerase/reverse transcriptase domain (RT). In terms of domain architecture, Reverse transcriptase spans 352 to 595 (EHNIRIPRTP…YSLNFMGYVI (244 aa)). The Mg(2+) site is built by aspartate 424, aspartate 546, and aspartate 547.

The protein belongs to the hepadnaviridae P protein family.

It carries out the reaction DNA(n) + a 2'-deoxyribonucleoside 5'-triphosphate = DNA(n+1) + diphosphate. The catalysed reaction is Endonucleolytic cleavage to 5'-phosphomonoester.. Activated by host HSP70 and HSP40 in vitro to be able to bind the epsilon loop of the pgRNA. Because deletion of the RNase H region renders the protein partly chaperone-independent, the chaperones may be needed indirectly to relieve occlusion of the RNA-binding site by this domain. Inhibited by several reverse-transcriptase inhibitors: Lamivudine, Adefovir and Entecavir. In terms of biological role, multifunctional enzyme that converts the viral RNA genome into dsDNA in viral cytoplasmic capsids. This enzyme displays a DNA polymerase activity that can copy either DNA or RNA templates, and a ribonuclease H (RNase H) activity that cleaves the RNA strand of RNA-DNA heteroduplexes in a partially processive 3'- to 5'-endonucleasic mode. Neo-synthesized pregenomic RNA (pgRNA) are encapsidated together with the P protein, and reverse-transcribed inside the nucleocapsid. Initiation of reverse-transcription occurs first by binding the epsilon loop on the pgRNA genome, and is initiated by protein priming, thereby the 5'-end of (-)DNA is covalently linked to P protein. Partial (+)DNA is synthesized from the (-)DNA template and generates the relaxed circular DNA (RC-DNA) genome. After budding and infection, the RC-DNA migrates in the nucleus, and is converted into a plasmid-like covalently closed circular DNA (cccDNA). The activity of P protein does not seem to be necessary for cccDNA generation, and is presumably released from (+)DNA by host nuclear DNA repair machinery. The chain is Protein P from Homo sapiens (Human).